Here is a 495-residue protein sequence, read N- to C-terminus: UDP-N-acetylmuramoyl-L-alanyl-D-glutamate--2,6-diaminopimelate ligase (495 aa).

A UDP-N-acetyl-alpha-D-muramoyl-L-alanyl-D-glutamate-binding site is contributed by Ser-29. Gly-111–Ser-117 lines the ATP pocket. Residues Thr-153–Thr-154, Ser-180, Gln-186, and Arg-188 each bind UDP-N-acetyl-alpha-D-muramoyl-L-alanyl-D-glutamate. Lys-220 carries the N6-carboxylysine modification. Residues Arg-384, Asp-408–Arg-411, Gly-459, and Glu-463 contribute to the meso-2,6-diaminopimelate site. Positions Asp-408–Arg-411 match the Meso-diaminopimelate recognition motif motif.

This sequence belongs to the MurCDEF family. MurE subfamily. Mg(2+) is required as a cofactor. In terms of processing, carboxylation is probably crucial for Mg(2+) binding and, consequently, for the gamma-phosphate positioning of ATP.

The protein localises to the cytoplasm. The catalysed reaction is UDP-N-acetyl-alpha-D-muramoyl-L-alanyl-D-glutamate + meso-2,6-diaminopimelate + ATP = UDP-N-acetyl-alpha-D-muramoyl-L-alanyl-gamma-D-glutamyl-meso-2,6-diaminopimelate + ADP + phosphate + H(+). It functions in the pathway cell wall biogenesis; peptidoglycan biosynthesis. Its function is as follows. Catalyzes the addition of meso-diaminopimelic acid to the nucleotide precursor UDP-N-acetylmuramoyl-L-alanyl-D-glutamate (UMAG) in the biosynthesis of bacterial cell-wall peptidoglycan. The polypeptide is UDP-N-acetylmuramoyl-L-alanyl-D-glutamate--2,6-diaminopimelate ligase (Xanthomonas oryzae pv. oryzae (strain MAFF 311018)).